The chain runs to 194 residues: Peptidyl-tRNA hydrolase (194 aa).

A tRNA-binding site is contributed by Tyr17. The active-site Proton acceptor is His22. Positions 68, 70, and 116 each coordinate tRNA.

The protein belongs to the PTH family. In terms of assembly, monomer.

It is found in the cytoplasm. It catalyses the reaction an N-acyl-L-alpha-aminoacyl-tRNA + H2O = an N-acyl-L-amino acid + a tRNA + H(+). Its function is as follows. Hydrolyzes ribosome-free peptidyl-tRNAs (with 1 or more amino acids incorporated), which drop off the ribosome during protein synthesis, or as a result of ribosome stalling. Catalyzes the release of premature peptidyl moieties from peptidyl-tRNA molecules trapped in stalled 50S ribosomal subunits, and thus maintains levels of free tRNAs and 50S ribosomes. This Actinobacillus succinogenes (strain ATCC 55618 / DSM 22257 / CCUG 43843 / 130Z) protein is Peptidyl-tRNA hydrolase.